The primary structure comprises 122 residues: Vitelline membrane protein 15a-3 (122 aa).

The N-terminal stretch at 1–17 is a signal peptide; it reads MNKFIILALFAVAAASA. Residues 21–49 are compositionally biased toward pro residues; sequence YPPPPPKPYHAPPPPPHHAHPPPPPPPPA. Disordered stretches follow at residues 21–63 and 103–122; these read YPPP…APVV and PAPA…QFEE. Positions 69–109 constitute a VM domain; it reads HAPHAKCGANLLVGCAPSVAHAPCVPLHGHGHGYPAPAPHY.

It belongs to the vitelline membrane protein family. As to expression, expressed in the middle and posterior regions of the follicle cells.

The protein resides in the secreted. In Aedes aegypti (Yellowfever mosquito), this protein is Vitelline membrane protein 15a-3.